Here is a 264-residue protein sequence, read N- to C-terminus: S-adenosylmethionine decarboxylase proenzyme (264 aa).

The Schiff-base intermediate with substrate; via pyruvic acid role is filled by serine 112. Serine 112 is subject to Pyruvic acid (Ser); by autocatalysis. Residue histidine 117 is the Proton acceptor; for processing activity of the active site. Cysteine 140 serves as the catalytic Proton donor; for catalytic activity.

This sequence belongs to the prokaryotic AdoMetDC family. Type 2 subfamily. In terms of assembly, heterooctamer of four alpha and four beta chains arranged as a tetramer of alpha/beta heterodimers. Pyruvate is required as a cofactor. Post-translationally, is synthesized initially as an inactive proenzyme. Formation of the active enzyme involves a self-maturation process in which the active site pyruvoyl group is generated from an internal serine residue via an autocatalytic post-translational modification. Two non-identical subunits are generated from the proenzyme in this reaction, and the pyruvate is formed at the N-terminus of the alpha chain, which is derived from the carboxyl end of the proenzyme. The post-translation cleavage follows an unusual pathway, termed non-hydrolytic serinolysis, in which the side chain hydroxyl group of the serine supplies its oxygen atom to form the C-terminus of the beta chain, while the remainder of the serine residue undergoes an oxidative deamination to produce ammonia and the pyruvoyl group blocking the N-terminus of the alpha chain.

The catalysed reaction is S-adenosyl-L-methionine + H(+) = S-adenosyl 3-(methylsulfanyl)propylamine + CO2. It participates in amine and polyamine biosynthesis; S-adenosylmethioninamine biosynthesis; S-adenosylmethioninamine from S-adenosyl-L-methionine: step 1/1. Catalyzes the decarboxylation of S-adenosylmethionine to S-adenosylmethioninamine (dcAdoMet), the propylamine donor required for the synthesis of the polyamines spermine and spermidine from the diamine putrescine. The protein is S-adenosylmethionine decarboxylase proenzyme of Klebsiella pneumoniae subsp. pneumoniae (strain ATCC 700721 / MGH 78578).